Reading from the N-terminus, the 60-residue chain is Large ribosomal subunit protein uL30 (60 aa).

This sequence belongs to the universal ribosomal protein uL30 family. Part of the 50S ribosomal subunit.

The chain is Large ribosomal subunit protein uL30 from Streptomyces griseus subsp. griseus (strain JCM 4626 / CBS 651.72 / NBRC 13350 / KCC S-0626 / ISP 5235).